The chain runs to 245 residues: Probable transcriptional regulatory protein LVIS_1199 (245 aa).

Positions 1-23 are disordered; it reads MSGHSKWHNIQGRKNAQDAKRGK.

Belongs to the TACO1 family.

The protein localises to the cytoplasm. The sequence is that of Probable transcriptional regulatory protein LVIS_1199 from Levilactobacillus brevis (strain ATCC 367 / BCRC 12310 / CIP 105137 / JCM 1170 / LMG 11437 / NCIMB 947 / NCTC 947) (Lactobacillus brevis).